The primary structure comprises 315 residues: Protein translocase subunit SecF (315 aa).

6 consecutive transmembrane segments (helical) span residues 12 to 32 (AWIV…ISWA), 136 to 156 (ALFR…IIYL), 166 to 186 (VFAI…FAIF), 188 to 208 (LVGG…IIGF), 247 to 267 (SINT…FGGD), and 271 to 291 (FFAL…IFMA).

Belongs to the SecD/SecF family. SecF subfamily. As to quaternary structure, forms a complex with SecD. Part of the essential Sec protein translocation apparatus which comprises SecA, SecYEG and auxiliary proteins SecDF. Other proteins may also be involved.

Its subcellular location is the cell inner membrane. Functionally, part of the Sec protein translocase complex. Interacts with the SecYEG preprotein conducting channel. SecDF uses the proton motive force (PMF) to complete protein translocation after the ATP-dependent function of SecA. Probably participates in protein translocation into and across both the cytoplasmic and thylakoid membranes in cyanobacterial cells. The chain is Protein translocase subunit SecF from Synechocystis sp. (strain ATCC 27184 / PCC 6803 / Kazusa).